The chain runs to 116 residues: Photosystem II assembly factor Psb28 protein (116 aa).

The protein belongs to the Psb28 family. In terms of assembly, part of a photosystem II (PSII) assembly intermediate complex PSII-I; crystallized from a strain deleted of psbJ, it forms monomeric PSII before addition of the oxygen evolving complex. PSII-I includes 3 assembly factors not found in mature PSII (Psb27, Psb28 and Psb34). This protein binds to the cytoplasmic face of D1 and D2 (psbA and psbD), contacting CP47 (psbB) directly above the quinone b-binding site.

The protein resides in the cellular thylakoid membrane. A photosystem II (PSII) assembly factor that binds PSII during biogenesis, protecting the complex until water splitting is activated. The protein is Photosystem II assembly factor Psb28 protein of Thermosynechococcus vestitus (strain NIES-2133 / IAM M-273 / BP-1).